The sequence spans 477 residues: Zinc metalloproteinase/disintegrin (477 aa).

The first 20 residues, 1-20 (MIEVLLVTICLAAFPYQGSS), serve as a signal peptide directing secretion. Residues 21–187 (IILESGNVND…PIKKASQSNL (167 aa)) constitute a propeptide that is removed on maturation. Residues 193 to 389 (RYIELFLVVD…DNPQCILNKQ (197 aa)) form the Peptidase M12B domain. 2 residues coordinate Ca(2+): E196 and D280. 3 disulfide bridges follow: C304/C384, C344/C368, and C346/C351. Position 329 (H329) interacts with Zn(2+). Residue E330 is part of the active site. Zn(2+)-binding residues include H333 and H339. Positions 384 and 387 each coordinate Ca(2+). Residues 390–404 (LRTDTVSTPVSGKNF) constitute a propeptide that is removed on maturation. The region spanning 396–477 (STPVSGKNFG…AGCPRNPFHA (82 aa)) is the Disintegrin domain. Cystine bridges form between C410–C425, C412–C420, C419–C442, C433–C439, C438–C463, and C451–C470. Residues 455–457 (RGD) carry the Cell attachment site motif.

This sequence belongs to the venom metalloproteinase (M12B) family. P-II subfamily. P-IIa sub-subfamily. Monomer. Zn(2+) is required as a cofactor. Expressed by the venom gland.

The protein localises to the secreted. With respect to regulation, inhibited by 1,10-phenanthroline and EDTA. In terms of biological role, impairs hemostasis in the envenomed animal. Does not exhibit detectable plasminogen activating activity. Has hemagglutinating activity on red blood cells. Cleaves insulin B chain at '38-Ala-|-Leu-39' and '40-Tyr-|-Leu-41' bonds. Functionally, this recombinant protein shows high inhibitory activity on collagen-induced platelet aggregation. This is Zinc metalloproteinase/disintegrin from Bothrops jararaca (Jararaca).